A 90-amino-acid chain; its full sequence is Small ribosomal subunit protein bS20 (90 aa).

A compositionally biased stretch (basic and acidic residues) spans 1–11 (MANIKSSEKDI). 2 disordered regions span residues 1-29 (MANI…SRLR) and 69-90 (SKNA…SAAA).

The protein belongs to the bacterial ribosomal protein bS20 family.

In terms of biological role, binds directly to 16S ribosomal RNA. The chain is Small ribosomal subunit protein bS20 from Leptospira borgpetersenii serovar Hardjo-bovis (strain L550).